The sequence spans 487 residues: Glutamate--tRNA ligase 2 (487 aa).

The 'HIGH' region motif lies at 31 to 41 (PSPTGHLHVGG). A 'KMSKS' region motif is present at residues 254-258 (PLSKR). Position 257 (K257) interacts with ATP.

This sequence belongs to the class-I aminoacyl-tRNA synthetase family. Glutamate--tRNA ligase type 1 subfamily. As to quaternary structure, monomer.

The protein resides in the cytoplasm. The catalysed reaction is tRNA(Glu) + L-glutamate + ATP = L-glutamyl-tRNA(Glu) + AMP + diphosphate. Its function is as follows. Catalyzes the attachment of glutamate to tRNA(Glu) in a two-step reaction: glutamate is first activated by ATP to form Glu-AMP and then transferred to the acceptor end of tRNA(Glu). This Thermotoga maritima (strain ATCC 43589 / DSM 3109 / JCM 10099 / NBRC 100826 / MSB8) protein is Glutamate--tRNA ligase 2.